Here is a 291-residue protein sequence, read N- to C-terminus: Acetylglutamate kinase (291 aa).

Substrate is bound by residues glycine 64–glycine 65, arginine 86, and asparagine 190.

Belongs to the acetylglutamate kinase family. ArgB subfamily.

Its subcellular location is the cytoplasm. It carries out the reaction N-acetyl-L-glutamate + ATP = N-acetyl-L-glutamyl 5-phosphate + ADP. Its pathway is amino-acid biosynthesis; L-arginine biosynthesis; N(2)-acetyl-L-ornithine from L-glutamate: step 2/4. In terms of biological role, catalyzes the ATP-dependent phosphorylation of N-acetyl-L-glutamate. This Leptospira borgpetersenii serovar Hardjo-bovis (strain L550) protein is Acetylglutamate kinase.